Reading from the N-terminus, the 374-residue chain is Chaperone protein DnaJ (374 aa).

Positions 4–68 constitute a J domain; it reads DYYDILGVSR…ETRARYDRFG (65 aa). The CR-type zinc-finger motif lies at 133–215; that stretch reads GGEKQIRITH…CGGNGQAQVT (83 aa). Residues Cys146, Cys149, Cys163, Cys166, Cys189, Cys192, Cys203, and Cys206 each contribute to the Zn(2+) site. CXXCXGXG motif repeat units follow at residues 146 to 153, 163 to 170, 189 to 196, and 203 to 210; these read CTTCNGSG, CGTCGGAG, CPTCNGKG, and CETCGGNG.

Belongs to the DnaJ family. In terms of assembly, homodimer. It depends on Zn(2+) as a cofactor.

Its subcellular location is the cytoplasm. In terms of biological role, participates actively in the response to hyperosmotic and heat shock by preventing the aggregation of stress-denatured proteins and by disaggregating proteins, also in an autonomous, DnaK-independent fashion. Unfolded proteins bind initially to DnaJ; upon interaction with the DnaJ-bound protein, DnaK hydrolyzes its bound ATP, resulting in the formation of a stable complex. GrpE releases ADP from DnaK; ATP binding to DnaK triggers the release of the substrate protein, thus completing the reaction cycle. Several rounds of ATP-dependent interactions between DnaJ, DnaK and GrpE are required for fully efficient folding. Also involved, together with DnaK and GrpE, in the DNA replication of plasmids through activation of initiation proteins. In Cyanothece sp. (strain PCC 7425 / ATCC 29141), this protein is Chaperone protein DnaJ.